Here is a 367-residue protein sequence, read N- to C-terminus: Putative F-box protein At3g21120 (367 aa).

An F-box domain is found at 1 to 43; that stretch reads MHLPEDLVLEILSKVPAVSLARFRSTCRRWNALVVDGSFAKKH.

In Arabidopsis thaliana (Mouse-ear cress), this protein is Putative F-box protein At3g21120.